The primary structure comprises 40 residues: Photosystem II reaction center protein J (40 aa).

Residues 8–28 (IPLWLIGTVTGTLVIGLIGIF) traverse the membrane as a helical segment.

The protein belongs to the PsbJ family. In terms of assembly, PSII is composed of 1 copy each of membrane proteins PsbA, PsbB, PsbC, PsbD, PsbE, PsbF, PsbH, PsbI, PsbJ, PsbK, PsbL, PsbM, PsbT, PsbX, PsbY, PsbZ, Psb30/Ycf12, at least 3 peripheral proteins of the oxygen-evolving complex and a large number of cofactors. It forms dimeric complexes.

It localises to the plastid. The protein resides in the chloroplast thylakoid membrane. In terms of biological role, one of the components of the core complex of photosystem II (PSII). PSII is a light-driven water:plastoquinone oxidoreductase that uses light energy to abstract electrons from H(2)O, generating O(2) and a proton gradient subsequently used for ATP formation. It consists of a core antenna complex that captures photons, and an electron transfer chain that converts photonic excitation into a charge separation. The protein is Photosystem II reaction center protein J of Cycas taitungensis (Prince sago).